A 461-amino-acid chain; its full sequence is MSMTGSSAYYVAHAIPPFLRLSNKTMLLLSTPPTTFFPTSTTPRVTLLSSTSSSSSSSISLRSSTAPSPSCSSVTPKDNCLASAKHSPPNMSASVSSRTFLNAQSEQDVFAGIKKEVEAGSLPANVAAGMEEVYNNYKKAVIQSGDPKANEIVLSNMIALLDRVFLDVTDPFVFQPHHKAKREPFDYYVFGQNYIRPLVDFKNAYVGNMPLFIEMEEKLKQGHNIILMSNHQTEADPAIISLLLETRLPYIAENLTYVAGDRVITDPLSKPFSIGRNLICVYSKKHMLDDPALVEMKRTANIRALKEMAMLLRNGSQLVWIAPSGGRDRPDAQTREWVPAPFDISSVDNMRRLVEHSGPPGHVYPLAILCHDIMPPPLKVEKEIGEKRIICFHGAGISVAPAISFSETTATCENPEKAKEVFSKALYNSVTEQYNVLKSAIQGKKGFEASTPVVTLSQPWK.

The N-terminal 96 residues, 1 to 96, are a transit peptide targeting the chloroplast; it reads MSMTGSSAYY…SPPNMSASVS (96 aa). Residues 47 to 76 are compositionally biased toward low complexity; it reads LLSSTSSSSSSSISLRSSTAPSPSCSSVTP. Residues 47 to 88 are disordered; it reads LLSSTSSSSSSSISLRSSTAPSPSCSSVTPKDNCLASAKHSP. The short motif at 231 to 236 is the HXXXXD motif element; that stretch reads HQTEAD.

Belongs to the GPAT/DAPAT family.

It localises to the plastid. The protein resides in the chloroplast stroma. It carries out the reaction sn-glycerol 3-phosphate + an acyl-CoA = a 1-acyl-sn-glycero-3-phosphate + CoA. The protein operates within phospholipid metabolism; CDP-diacylglycerol biosynthesis; CDP-diacylglycerol from sn-glycerol 3-phosphate: step 1/3. Functionally, esterifies acyl-group from acyl-ACP to the sn-1 position of glycerol-3-phosphate. The enzyme from chilling-resistant plants discriminates against non-fluid palmitic acid and selects oleic acid whereas the enzyme from sensitive plants accepts both fatty acids. In Phaseolus vulgaris (Kidney bean), this protein is Glycerol-3-phosphate acyltransferase, chloroplastic (PLSB).